A 192-amino-acid chain; its full sequence is Fe/S biogenesis protein NfuA (192 aa).

Positions 149 and 152 each coordinate [4Fe-4S] cluster.

The protein belongs to the NfuA family. As to quaternary structure, homodimer. It depends on [4Fe-4S] cluster as a cofactor.

Involved in iron-sulfur cluster biogenesis. Binds a 4Fe-4S cluster, can transfer this cluster to apoproteins, and thereby intervenes in the maturation of Fe/S proteins. Could also act as a scaffold/chaperone for damaged Fe/S proteins. The sequence is that of Fe/S biogenesis protein NfuA from Alteromonas mediterranea (strain DSM 17117 / CIP 110805 / LMG 28347 / Deep ecotype).